Consider the following 973-residue polypeptide: Protein HypA (973 aa).

This Clostridium perfringens (strain 13 / Type A) protein is Protein HypA (hypA).